Here is a 101-residue protein sequence, read N- to C-terminus: DNA-binding protein Fis (101 aa).

Positions 77-96 (QTRAANMLGINRGTLRKKLK) form a DNA-binding region, H-T-H motif.

The protein belongs to the transcriptional regulatory Fis family. Homodimer.

In terms of biological role, activates ribosomal RNA transcription. Plays a direct role in upstream activation of rRNA promoters. In Shewanella halifaxensis (strain HAW-EB4), this protein is DNA-binding protein Fis.